We begin with the raw amino-acid sequence, 408 residues long: LL-diaminopimelate aminotransferase (408 aa).

Residues Y15 and G42 each contribute to the substrate site. Pyridoxal 5'-phosphate-binding positions include Y72, 108–109, Y132, N187, Y218, and 246–248; these read SK and SFS. Substrate contacts are provided by K109, Y132, and N187. K249 carries the post-translational modification N6-(pyridoxal phosphate)lysine. Pyridoxal 5'-phosphate-binding residues include R257 and N292. N292 and R388 together coordinate substrate.

This sequence belongs to the class-I pyridoxal-phosphate-dependent aminotransferase family. LL-diaminopimelate aminotransferase subfamily. In terms of assembly, homodimer. It depends on pyridoxal 5'-phosphate as a cofactor.

It catalyses the reaction (2S,6S)-2,6-diaminopimelate + 2-oxoglutarate = (S)-2,3,4,5-tetrahydrodipicolinate + L-glutamate + H2O + H(+). The protein operates within amino-acid biosynthesis; L-lysine biosynthesis via DAP pathway; LL-2,6-diaminopimelate from (S)-tetrahydrodipicolinate (aminotransferase route): step 1/1. In terms of biological role, involved in the synthesis of meso-diaminopimelate (m-DAP or DL-DAP), required for both lysine and peptidoglycan biosynthesis. Catalyzes the direct conversion of tetrahydrodipicolinate to LL-diaminopimelate. This is LL-diaminopimelate aminotransferase from Synechococcus sp. (strain CC9902).